Here is a 449-residue protein sequence, read N- to C-terminus: Methylenetetrahydrofolate--tRNA-(uracil-5-)-methyltransferase TrmFO (449 aa).

FAD is bound at residue 10–15 (GGGLAG).

The protein belongs to the MnmG family. TrmFO subfamily. It depends on FAD as a cofactor.

Its subcellular location is the cytoplasm. The catalysed reaction is uridine(54) in tRNA + (6R)-5,10-methylene-5,6,7,8-tetrahydrofolate + NADH + H(+) = 5-methyluridine(54) in tRNA + (6S)-5,6,7,8-tetrahydrofolate + NAD(+). It carries out the reaction uridine(54) in tRNA + (6R)-5,10-methylene-5,6,7,8-tetrahydrofolate + NADPH + H(+) = 5-methyluridine(54) in tRNA + (6S)-5,6,7,8-tetrahydrofolate + NADP(+). Functionally, catalyzes the folate-dependent formation of 5-methyl-uridine at position 54 (M-5-U54) in all tRNAs. The sequence is that of Methylenetetrahydrofolate--tRNA-(uracil-5-)-methyltransferase TrmFO from Sphingopyxis alaskensis (strain DSM 13593 / LMG 18877 / RB2256) (Sphingomonas alaskensis).